A 580-amino-acid chain; its full sequence is PTS system fructose-specific EIIB'BC component (580 aa).

2 PTS EIIB type-2 domains span residues 3–100 (MKIA…QAAE) and 124–221 (KKIV…NAFA). Catalysis depends on phosphocysteine intermediate; for EIIB activity residues C11 and C132. A phosphocysteine; by EIIA mark is found at C11 and C132. A PTS EIIC type-2 domain is found at 244 to 579 (VYKHLMTGVS…KKSAQAKAVA (336 aa)). Helical transmembrane passes span 254–274 (HMLP…VFGI), 292–312 (GGSA…FSIA), 322–342 (IGGM…VAGF), 367–387 (ILII…YVVG), 408–428 (NAIL…GGPV), 448–468 (MAAI…ATFI), 480–500 (AGKA…IPFA), 507–527 (VIPA…LFGA), and 537–557 (FVLL…AIAV).

Its subcellular location is the cell inner membrane. It carries out the reaction D-fructose(out) + N(pros)-phospho-L-histidyl-[protein] = D-fructose 1-phosphate(in) + L-histidyl-[protein]. The phosphoenolpyruvate-dependent sugar phosphotransferase system (sugar PTS), a major carbohydrate active transport system, catalyzes the phosphorylation of incoming sugar substrates concomitantly with their translocation across the cell membrane. The enzyme II FruAB PTS system is involved in fructose transport. The protein is PTS system fructose-specific EIIB'BC component of Vibrio cholerae serotype O1 (strain ATCC 39315 / El Tor Inaba N16961).